The chain runs to 238 residues: Purine nucleoside phosphorylase DeoD-type (238 aa).

His4 serves as a coordination point for a purine D-ribonucleoside. Phosphate-binding positions include Gly20, Arg24, Arg43, and 87-90 (RVGS). A purine D-ribonucleoside contacts are provided by residues 179-181 (EME) and 203-204 (SD). Residue Asp204 is the Proton donor of the active site.

Belongs to the PNP/UDP phosphorylase family. As to quaternary structure, homohexamer; trimer of homodimers.

The enzyme catalyses a purine D-ribonucleoside + phosphate = a purine nucleobase + alpha-D-ribose 1-phosphate. It catalyses the reaction a purine 2'-deoxy-D-ribonucleoside + phosphate = a purine nucleobase + 2-deoxy-alpha-D-ribose 1-phosphate. Its function is as follows. Catalyzes the reversible phosphorolytic breakdown of the N-glycosidic bond in the beta-(deoxy)ribonucleoside molecules, with the formation of the corresponding free purine bases and pentose-1-phosphate. The sequence is that of Purine nucleoside phosphorylase DeoD-type from Haemophilus ducreyi (strain 35000HP / ATCC 700724).